We begin with the raw amino-acid sequence, 133 residues long: Ribosome-binding factor A (133 aa).

Belongs to the RbfA family. As to quaternary structure, monomer. Binds 30S ribosomal subunits, but not 50S ribosomal subunits or 70S ribosomes.

It is found in the cytoplasm. One of several proteins that assist in the late maturation steps of the functional core of the 30S ribosomal subunit. Associates with free 30S ribosomal subunits (but not with 30S subunits that are part of 70S ribosomes or polysomes). Required for efficient processing of 16S rRNA. May interact with the 5'-terminal helix region of 16S rRNA. This Cronobacter sakazakii (strain ATCC BAA-894) (Enterobacter sakazakii) protein is Ribosome-binding factor A.